A 3080-amino-acid chain; its full sequence is Protein PIEZO homolog (3080 aa).

6 helical membrane passes run Tyr-28–Leu-48, Pro-57–Val-77, Leu-86–Phe-106, Val-113–Pro-133, Tyr-204–Ala-224, and Val-232–Tyr-252. Asn-276 carries an N-linked (GlcNAc...) asparagine glycan. The helical transmembrane segment at Trp-285 to Phe-305 threads the bilayer. Residues Asn-312 and Asn-339 are each glycosylated (N-linked (GlcNAc...) asparagine). Transmembrane regions (helical) follow at residues Ile-362–Gly-382 and Val-396–Ile-416. Residue Asn-434 is glycosylated (N-linked (GlcNAc...) asparagine). Residues Trp-438–Ser-458 traverse the membrane as a helical segment. The segment at Lys-469–Pro-548 is disordered. The span at Gln-473–Gln-505 shows a compositional bias: low complexity. Residues Ile-512–Gln-532 are compositionally biased toward polar residues. N-linked (GlcNAc...) asparagine glycosylation is found at Asn-514, Asn-567, and Asn-606. 3 consecutive transmembrane segments (helical) span residues Gly-672 to Ile-692, Phe-700 to Leu-720, and Tyr-740 to Ile-760. Asn-795 carries N-linked (GlcNAc...) asparagine glycosylation. The next 3 membrane-spanning stretches (helical) occupy residues Phe-827 to Val-847, Met-849 to Ile-869, and Phe-872 to Phe-892. Residue Asn-918 is glycosylated (N-linked (GlcNAc...) asparagine). A helical transmembrane segment spans residues Leu-928–Ile-948. A glycan (N-linked (GlcNAc...) asparagine) is linked at Asn-992. 2 helical membrane-spanning segments follow: residues Phe-1036–Ile-1056 and Ile-1067–Leu-1087. N-linked (GlcNAc...) asparagine glycosylation occurs at Asn-1109. A disordered region spans residues Gln-1158–Lys-1185. Residues His-1166–Gln-1176 are compositionally biased toward acidic residues. Residues Asn-1191, Asn-1240, and Asn-1251 are each glycosylated (N-linked (GlcNAc...) asparagine). Residues Asp-1199–Ser-1253 form a disordered region. A compositionally biased stretch (low complexity) spans Asn-1202–Asn-1252. 3 consecutive transmembrane segments (helical) span residues Val-1281 to Ile-1301, Ile-1316 to Val-1336, and Leu-1360 to Phe-1380. N-linked (GlcNAc...) asparagine glycans are attached at residues Asn-1424 and Asn-1440. 2 helical membrane passes run Val-1472–Tyr-1492 and Ile-1519–Phe-1539. 2 N-linked (GlcNAc...) asparagine glycosylation sites follow: Asn-1559 and Asn-1589. Residues Ile-1619–Ala-1639 form a helical membrane-spanning segment. Residues Arg-1704 to His-1714 are compositionally biased toward basic residues. The tract at residues Arg-1704–Val-1812 is disordered. Residues Tyr-1715–Asn-1742 are compositionally biased toward low complexity. N-linked (GlcNAc...) asparagine glycosylation is found at Asn-1731, Asn-1734, Asn-1763, Asn-1768, Asn-1771, Asn-1779, Asn-1807, and Asn-1864. Residues Lys-1762–Met-1782 show a composition bias toward polar residues. Low complexity predominate over residues Asn-1789–Val-1812. Disordered regions lie at residues Leu-1873–Glu-1899 and Ser-1958–Ser-2032. Residues Ser-1958–Asn-2021 are compositionally biased toward low complexity. A glycan (N-linked (GlcNAc...) asparagine) is linked at Asn-2027. 2 consecutive transmembrane segments (helical) span residues Ile-2078–Leu-2098 and Phe-2112–Ile-2132. Residue Asn-2148 is glycosylated (N-linked (GlcNAc...) asparagine). A helical membrane pass occupies residues Val-2199–Ile-2219. The tract at residues Leu-2277–Asn-2367 is disordered. Asn-2285 is a glycosylation site (N-linked (GlcNAc...) asparagine). Residues Asn-2288 to Asn-2367 are compositionally biased toward low complexity. 2 consecutive transmembrane segments (helical) span residues Ile-2427–Ile-2447 and Tyr-2457–Gln-2477. N-linked (GlcNAc...) asparagine glycosylation is present at Asn-2478. 4 helical membrane passes run Tyr-2500 to Tyr-2520, Gln-2530 to Val-2550, Phe-2553 to Tyr-2573, and Phe-2671 to Ile-2691. N-linked (GlcNAc...) asparagine glycans are attached at residues Asn-2762, Asn-2790, Asn-2837, Asn-2840, Asn-2848, Asn-2858, Asn-2908, Asn-2913, and Asn-2935. The interval Gln-2835 to Asn-2863 is disordered. Residues Ser-2836–Asn-2863 show a composition bias toward low complexity. A helical transmembrane segment spans residues Ile-2955–Val-2975. Residues Pro-3054 to Asn-3080 form a disordered region. N-linked (GlcNAc...) asparagine glycosylation occurs at Asn-3057. The segment covering Asn-3061 to Asn-3074 has biased composition (low complexity).

The protein belongs to the PIEZO (TC 1.A.75) family.

It localises to the membrane. The polypeptide is Protein PIEZO homolog (Dictyostelium discoideum (Social amoeba)).